Here is a 226-residue protein sequence, read N- to C-terminus: RLA class II histocompatibility antigen, DP alpha-1 chain (226 aa).

Residues 1–189 (EHVSVFVIFA…PIQMPETTET (189 aa)) are Extracellular-facing. 2 N-linked (GlcNAc...) asparagine glycosylation sites follow: Asn-75 and Asn-115. The Ig-like C1-type domain maps to 84 to 176 (PEVIVFPKEP…LDAPLLTHWE (93 aa)). A disulfide bond links Cys-104 and Cys-160. Residues 190 to 210 (VVCALGLVVGLAGVVVGIVLI) traverse the membrane as a helical segment. The Cytoplasmic segment spans residues 211-226 (TKALRSSPDPRARRPL).

It belongs to the MHC class II family.

It is found in the membrane. This Oryctolagus cuniculus (Rabbit) protein is RLA class II histocompatibility antigen, DP alpha-1 chain.